The primary structure comprises 484 residues: AMP nucleosidase (484 aa).

This sequence belongs to the AMP nucleosidase family.

It catalyses the reaction AMP + H2O = adenine + D-ribose 5-phosphate. Its function is as follows. Catalyzes the hydrolysis of the N-glycosidic bond of AMP to form adenine and ribose 5-phosphate. Involved in regulation of AMP concentrations. In Escherichia coli O157:H7, this protein is AMP nucleosidase.